Consider the following 159-residue polypeptide: Ribosomal RNA large subunit methyltransferase H (159 aa).

S-adenosyl-L-methionine is bound by residues glycine 108 and 127-132; that span reads FGPMTF.

This sequence belongs to the RNA methyltransferase RlmH family. Homodimer.

It localises to the cytoplasm. The catalysed reaction is pseudouridine(1915) in 23S rRNA + S-adenosyl-L-methionine = N(3)-methylpseudouridine(1915) in 23S rRNA + S-adenosyl-L-homocysteine + H(+). Specifically methylates the pseudouridine at position 1915 (m3Psi1915) in 23S rRNA. The sequence is that of Ribosomal RNA large subunit methyltransferase H from Magnetococcus marinus (strain ATCC BAA-1437 / JCM 17883 / MC-1).